A 641-amino-acid chain; its full sequence is Choline O-acetyltransferase (641 aa).

Residues 1–29 (MPILEKTPPKMAAKSPSSEEEPGLPKLPV) form a disordered region. Serine 17 is subject to Phosphoserine. Histidine 335 (proton acceptor) is an active-site residue. Residue serine 366 is modified to Phosphoserine. CoA-binding positions include 413–425 (GKTF…CSPD), serine 451, and glutamine 552. Positions 619-641 (QSGMGKPLATKEKVTRPSQVHQP) are disordered.

Belongs to the carnitine/choline acetyltransferase family.

It carries out the reaction choline + acetyl-CoA = acetylcholine + CoA. Functionally, catalyzes the reversible synthesis of acetylcholine (ACh) from acetyl CoA and choline at cholinergic synapses. This is Choline O-acetyltransferase (CHAT) from Sus scrofa (Pig).